Here is a 509-residue protein sequence, read N- to C-terminus: Ribonuclease Y (509 aa).

Residues 3–23 traverse the membrane as a helical segment; that stretch reads WILYVILPAVCIILGWTIRWL. The 86-residue stretch at 199–284 folds into the KH domain; it reads TVSTVSLPSD…EIVQKVTREI (86 aa). One can recognise an HD domain in the interval 325 to 418; it reads VLQHSKEVAI…VQIADAISAA (94 aa).

This sequence belongs to the RNase Y family.

It localises to the cell membrane. Endoribonuclease that initiates mRNA decay. The polypeptide is Ribonuclease Y (Treponema denticola (strain ATCC 35405 / DSM 14222 / CIP 103919 / JCM 8153 / KCTC 15104)).